We begin with the raw amino-acid sequence, 219 residues long: uncharacterized protein (219 aa).

Helical transmembrane passes span Val81–Ile101 and Pro168–Val188.

It localises to the membrane. This is an uncharacterized protein from Saccharomyces cerevisiae (strain ATCC 204508 / S288c) (Baker's yeast).